The sequence spans 882 residues: MKTIKPQTPEGNEKHTPMMQQYLRIKAEYPTTLVFYRMGDFYELFFDDAEKASRLLGITLTQRGASNGNPIKMAGVPFHAVDQYLSKLVKLGESIAICEQIGDPATSKGPVERKVLRVITPGTLTDSDLLPEKSEQPLLALYSTTQRKTATIGLAWLSMASGVLKLMEFATDAQNADVRLKHELERIAPAEILLPGSVNDLFSEFSLAKNTTVPDWHFDIAHGTKALYEQLNVGTLTGFGAENLSAAIGAAGALLRYAQSTQGKGLQHVRTLTVETENEFIGLDAATRRNLELTETIRGQDANAATLFSLLDHCRTAMGSRLLRHWLHHARRDQSVAMARHAAINALMRADACSGLASTLASVPDVERITTRIALLSARPRDLAGMRGGLQQLPSLRAYVSMCNKDADAPLLKTIHDALATPSDCLDLVERAIAMEPAAMVRDGGVIARGFDAELDELRGLSENAGQFLIDLETRERARTGINNLRVEYNKVHGFYIEVTHGQTDKVPDDYRRRQTLKNAERYITPELKAFEDKALSAQERALAREKYLYEQVLQQMTQHIATLQNIAHALAQLDTLVALAEHALRHNWCAPQLVSEPTITIEQGRHPVVENHIERFIANDCLLSSECKLLLITGPNMGGKSTYMRQVALITLLAYVGSFVPASSAVIGPIDRIFTRIGAADDLAGGRSTFMVEMTESAAILNGATENSLVLMDEVGRGTSTFDGLALAWAIAKHLIDNTKSFTLFATHYFELTQLPEIHPTAANVHLSAVEHKDSIVFLHAVQAGPASQSYGLQVAQLAGVPQPVIRAARKHLALLEANSMQATPQFDLFAGGGSPTTVESAAEPQQASAVDEAIAAINPDALSPREALDALYRLKELSNQ.

635 to 642 serves as a coordination point for ATP; that stretch reads GPNMGGKS.

This sequence belongs to the DNA mismatch repair MutS family.

In terms of biological role, this protein is involved in the repair of mismatches in DNA. It is possible that it carries out the mismatch recognition step. This protein has a weak ATPase activity. The polypeptide is DNA mismatch repair protein MutS (Janthinobacterium sp. (strain Marseille) (Minibacterium massiliensis)).